Reading from the N-terminus, the 335-residue chain is Ornithine carbamoyltransferase (335 aa).

Carbamoyl phosphate is bound by residues 60 to 63 (STRT), glutamine 87, arginine 111, and 138 to 141 (HPTQ). Residues asparagine 171, aspartate 235, and 239–240 (SM) each bind L-ornithine. Carbamoyl phosphate is bound by residues 277-278 (CL) and arginine 322.

The protein belongs to the aspartate/ornithine carbamoyltransferase superfamily. OTCase family.

The protein resides in the cytoplasm. It catalyses the reaction carbamoyl phosphate + L-ornithine = L-citrulline + phosphate + H(+). The protein operates within amino-acid biosynthesis; L-arginine biosynthesis; L-arginine from L-ornithine and carbamoyl phosphate: step 1/3. Its function is as follows. Reversibly catalyzes the transfer of the carbamoyl group from carbamoyl phosphate (CP) to the N(epsilon) atom of ornithine (ORN) to produce L-citrulline. This chain is Ornithine carbamoyltransferase, found in Streptomyces avermitilis (strain ATCC 31267 / DSM 46492 / JCM 5070 / NBRC 14893 / NCIMB 12804 / NRRL 8165 / MA-4680).